The sequence spans 205 residues: Glutathione peroxidase 1 (205 aa).

At Ser-37 the chain carries Phosphoserine. Sec-52 is an active-site residue. A non-standard amino acid (selenocysteine) is located at residue Sec-52. N6-acetyllysine; alternate is present on residues Lys-91 and Lys-117. N6-succinyllysine; alternate occurs at positions 91 and 117. Residue Lys-117 is glycosylated (N-linked (Glc) (glycation) lysine; in vitro). Lys-124 carries the post-translational modification N6-acetyllysine. At Lys-151 the chain carries N6-acetyllysine; alternate. Lys-151 carries the N6-succinyllysine; alternate modification. Ser-200 and Ser-204 each carry phosphoserine.

Belongs to the glutathione peroxidase family. In terms of assembly, homotetramer. Interacts with MIEN1. Post-translationally, during periods of oxidative stress, Sec-52 may react with a superoxide radical, irreversibly lose hydroselenide and be converted to dehydroalanine.

Its subcellular location is the cytoplasm. The protein localises to the mitochondrion. The enzyme catalyses 2 glutathione + H2O2 = glutathione disulfide + 2 H2O. It carries out the reaction a hydroperoxy polyunsaturated fatty acid + 2 glutathione = a hydroxy polyunsaturated fatty acid + glutathione disulfide + H2O. It catalyses the reaction tert-butyl hydroperoxide + 2 glutathione = tert-butanol + glutathione disulfide + H2O. The catalysed reaction is cumene hydroperoxide + 2 glutathione = 2-phenylpropan-2-ol + glutathione disulfide + H2O. The enzyme catalyses (13S)-hydroperoxy-(9Z,11E)-octadecadienoate + 2 glutathione = (13S)-hydroxy-(9Z,11E)-octadecadienoate + glutathione disulfide + H2O. It carries out the reaction (9S)-hydroperoxy-(10E,12Z)-octadecadienoate + 2 glutathione = (9S)-hydroxy-(10E,12Z)-octadecadienoate + glutathione disulfide + H2O. It catalyses the reaction (5S)-hydroperoxy-(6E,8Z,11Z,14Z)-eicosatetraenoate + 2 glutathione = (5S)-hydroxy-(6E,8Z,11Z,14Z)-eicosatetraenoate + glutathione disulfide + H2O. The catalysed reaction is (12S)-hydroperoxy-(5Z,8Z,10E,14Z)-eicosatetraenoate + 2 glutathione = (12S)-hydroxy-(5Z,8Z,10E,14Z)-eicosatetraenoate + glutathione disulfide + H2O. The enzyme catalyses (12R)-hydroperoxy-(5Z,8Z,10E,14Z)-eicosatetraenoate + 2 glutathione = (12R)-hydroxy-(5Z,8Z,10E,14Z)-eicosatetraenoate + glutathione disulfide + H2O. It carries out the reaction (15S)-hydroperoxy-(5Z,8Z,11Z,13E)-eicosatetraenoate + 2 glutathione = (15S)-hydroxy-(5Z,8Z,11Z,13E)-eicosatetraenoate + glutathione disulfide + H2O. It catalyses the reaction (5S)-hydroperoxy-(6E,8Z,11Z,14Z,17Z)-eicosapentaenoate + 2 glutathione = (5S)-hydroxy-(6E,8Z,11Z,14Z,17Z)-eicosapentaenoate + glutathione disulfide + H2O. The catalysed reaction is (15S)-hydroperoxy-(5Z,8Z,11Z,13E,17Z)-eicosapentaenoate + 2 glutathione = (15S)-hydroxy-(5Z,8Z,11Z,13E,17Z)-eicosapentaenoate + glutathione disulfide + H2O. The enzyme catalyses (15S)-hydroperoxy-(11Z,13E)-eicosadienoate + 2 glutathione = (15S)-hydroxy-(11Z,13E)-eicosadienoate + glutathione disulfide + H2O. It carries out the reaction (17S)-hydroperoxy-(4Z,7Z,10Z,13Z,15E,19Z)-docosahexaenoate + 2 glutathione = (17S)-hydroxy-(4Z,7Z,10Z,13Z,15E,19Z)-docosahexaenoate + glutathione disulfide + H2O. Its function is as follows. Catalyzes the reduction of hydroperoxides in a glutathione-dependent manner thus regulating cellular redox homeostasis. Can reduce small soluble hydroperoxides such as H2O2, cumene hydroperoxide and tert-butyl hydroperoxide, as well as several fatty acid-derived hydroperoxides. In platelets catalyzes the reduction of 12-hydroperoxyeicosatetraenoic acid, the primary product of the arachidonate 12-lipoxygenase pathway. In Bos taurus (Bovine), this protein is Glutathione peroxidase 1 (GPX1).